The following is a 176-amino-acid chain: MKLIEVDEELYRYIAAHTQYIGESASEILRRMFSLTQKKQTEIKIKKTPKIHQSSVKATLFSRIQILNDILSSETYASKNKVIARFMLILSTLYDLDSKAFSVAAESLQGRKRAYFSGSKNFLLKNGTHTKPKQIPKTPYWVITNTNSERKRTMLKNMMIAMKFPNEIAKKVSQTI.

The protein belongs to the SeqA family. As to quaternary structure, homodimer. Polymerizes to form helical filaments.

The protein resides in the cytoplasm. Its function is as follows. Negative regulator of replication initiation, which contributes to regulation of DNA replication and ensures that replication initiation occurs exactly once per chromosome per cell cycle. Binds to pairs of hemimethylated GATC sequences in the oriC region, thus preventing assembly of replication proteins and re-initiation at newly replicated origins. Repression is relieved when the region becomes fully methylated. The chain is Negative modulator of initiation of replication from Hamiltonella defensa subsp. Acyrthosiphon pisum (strain 5AT).